We begin with the raw amino-acid sequence, 501 residues long: CaM kinase-like vesicle-associated protein (501 aa).

Positions 24–286 constitute a Protein kinase domain; it reads YDLGQVIKTE…AEEAISHEWI (263 aa). The segment at 327-501 is disordered; that stretch reads RAPEQSSTAA…AQESQREEAS (175 aa). Low complexity predominate over residues 331–365; the sequence is QSSTAAAQSASATDTATPGAAGGATAAAASGATSA. The segment covering 387-428 has biased composition (polar residues); that stretch reads TPATDGSATPATDGSVTPATDGSITPATDGSVTPATDRSATP. T435 carries the post-translational modification Phosphothreonine. Residues 438 to 451 are compositionally biased toward polar residues; that stretch reads TEESTVPTTQSSAM. The residue at position 459 (T459) is a Phosphothreonine.

This sequence belongs to the protein kinase superfamily. CAMK Ser/Thr protein kinase family. In terms of assembly, interacts with calmodulin, in the presence of calcium. Ca(2+) is required as a cofactor.

The protein localises to the cell membrane. It is found in the cytoplasmic vesicle membrane. In terms of biological role, does not appear to have detectable kinase activity. The polypeptide is CaM kinase-like vesicle-associated protein (CAMKV) (Homo sapiens (Human)).